The sequence spans 289 residues: MSWLEKLLDKKNIINTRKASIPEGVWTKCPSCDQVLYRIALKENLEVCPKCQHHLRMSARHRLDGFLDKGERIELASEYEPKDLLNFKDKKRYKERLALSQKSTGEKDALVVMKGELLGLPIVACAFEFSFMAGSMGSVVGARFVDAVDTAIEENCGLVCFSACGGARMQESLMALMQMAKTSAALERLSNARLPYISVLTDQTFGGVSASLAMLGDINIGEPEARIGFAGRRVIEQTVREKLPDGFQQSEFLLEHGALDMIVQRHDMRERIGGLIAKLTNTSIRLEVK.

One can recognise a CoA carboxyltransferase N-terminal domain in the interval 25–289; that stretch reads VWTKCPSCDQ…TNTSIRLEVK (265 aa). 4 residues coordinate Zn(2+): C29, C32, C48, and C51. The C4-type zinc-finger motif lies at 29–51; the sequence is CPSCDQVLYRIALKENLEVCPKC.

This sequence belongs to the AccD/PCCB family. In terms of assembly, acetyl-CoA carboxylase is a heterohexamer composed of biotin carboxyl carrier protein (AccB), biotin carboxylase (AccC) and two subunits each of ACCase subunit alpha (AccA) and ACCase subunit beta (AccD). The cofactor is Zn(2+).

It localises to the cytoplasm. It carries out the reaction N(6)-carboxybiotinyl-L-lysyl-[protein] + acetyl-CoA = N(6)-biotinyl-L-lysyl-[protein] + malonyl-CoA. The protein operates within lipid metabolism; malonyl-CoA biosynthesis; malonyl-CoA from acetyl-CoA: step 1/1. Component of the acetyl coenzyme A carboxylase (ACC) complex. Biotin carboxylase (BC) catalyzes the carboxylation of biotin on its carrier protein (BCCP) and then the CO(2) group is transferred by the transcarboxylase to acetyl-CoA to form malonyl-CoA. This chain is Acetyl-coenzyme A carboxylase carboxyl transferase subunit beta 2, found in Vibrio parahaemolyticus serotype O3:K6 (strain RIMD 2210633).